The sequence spans 248 residues: Exosome complex component Rrp41 (248 aa).

It belongs to the RNase PH family. Rrp41 subfamily. In terms of assembly, component of the archaeal exosome complex. Forms a hexameric ring-like arrangement composed of 3 Rrp41-Rrp42 heterodimers. The hexameric ring associates with a trimer of Rrp4 and/or Csl4 subunits.

The protein resides in the cytoplasm. In terms of biological role, catalytic component of the exosome, which is a complex involved in RNA degradation. Has 3'-&gt;5' exoribonuclease activity. Can also synthesize heteromeric RNA-tails. This Thermoplasma volcanium (strain ATCC 51530 / DSM 4299 / JCM 9571 / NBRC 15438 / GSS1) protein is Exosome complex component Rrp41.